A 329-amino-acid polypeptide reads, in one-letter code: Short-chain dehydrogenase/reductase prx4 (329 aa).

Positions 58, 60, and 81 each coordinate NADP(+). Residue Asn91 is glycosylated (N-linked (GlcNAc...) asparagine). Residues Asp98, Asn121, Lys161, Tyr194, Lys198, and Thr229 each coordinate NADP(+). Tyr194 serves as the catalytic Proton acceptor. The active-site Lowers pKa of active site Tyr is Lys198. Residues 238-258 (GPLMAAGLPVSSAHMVGLAVV) form a helical membrane-spanning segment.

Belongs to the short-chain dehydrogenases/reductases (SDR) family.

It localises to the membrane. It participates in sesquiterpene biosynthesis. Functionally, short-chain dehydrogenase/reductase; part of the gene cluster that mediates the biosynthesis of PR-toxin, a bicyclic sesquiterpene belonging to the eremophilane class and acting as a mycotoxin. The first step of the pathway is catalyzed by the aristolochene synthase which performs the cyclization of trans,trans-farnesyl diphosphate (FPP) to the bicyclic sesquiterpene aristolochene. Following the formation of aristolochene, the non-oxygenated aristolochene is converted to the trioxygenated intermediate eremofortin B, via 7-epi-neopetasone. This conversion appears to involve three enzymes, a hydroxysterol oxidase-like enzyme, the quinone-oxidase prx3 that forms the quinone-type-structure in the bicyclic nucleus of aristolochene with the C8-oxo group and the C-3 hydroxyl group, and the P450 monooxygenase ORF6 that introduces the epoxide at the double bond between carbons 1 and 2. No monoxy or dioxy-intermediates have been reported to be released to the broth, so these three early oxidative reactions may be coupled together. Eremofortin B is further oxidized by another P450 monooxygenase, that introduces a second epoxide between carbons 7 and 11 prior to acetylation to eremofortin A by the acetyltransferase ORF8. The second epoxidation may be performed by a second P450 monooxygenase. After the acetylation step, eremofortin A is converted to eremofortin C and then to PR-toxin. First the conversion of eremofortin A to eremofortin C proceeds by oxidation of the side chain of the molecule at C-12 and is catalyzed by the short-chain oxidoreductase prx1. The cytochrome P450 monooxygenase ORF6 is probably also involved in this step. The primary alcohol formed at C-12 is finally oxidized by the short-chain alcohol dehydrogenase prx4 that forms PR-toxin. The chain is Short-chain dehydrogenase/reductase prx4 from Penicillium roqueforti.